A 440-amino-acid polypeptide reads, in one-letter code: Probable pectate lyase 10 (440 aa).

An N-terminal signal peptide occupies residues M1–A28. A disordered region spans residues E32–N56. N-linked (GlcNAc...) asparagine glycans are attached at residues N41 and N76. Ca(2+) contacts are provided by D238, D262, and D266. R318 is a catalytic residue.

This sequence belongs to the polysaccharide lyase 1 family. Ca(2+) serves as cofactor.

The catalysed reaction is Eliminative cleavage of (1-&gt;4)-alpha-D-galacturonan to give oligosaccharides with 4-deoxy-alpha-D-galact-4-enuronosyl groups at their non-reducing ends.. The protein operates within glycan metabolism; pectin degradation; 2-dehydro-3-deoxy-D-gluconate from pectin: step 2/5. This chain is Probable pectate lyase 10, found in Arabidopsis thaliana (Mouse-ear cress).